Reading from the N-terminus, the 334-residue chain is Hydroxyproline O-arabinosyltransferase NOD3 (334 aa).

Residues 1 to 18 traverse the membrane as a helical; Signal-anchor segment; it reads LLMVLGFFFATYNLVSMI.

This sequence belongs to the RDN family.

The protein localises to the golgi apparatus membrane. It catalyses the reaction trans-4-hydroxy-L-prolyl-[protein] + UDP-beta-L-arabinofuranose = O-(beta-L-arabinofuranosyl)-trans-4-hydroxy-L-prolyl-[protein] + UDP + H(+). In terms of biological role, probable glycosyltransferase involved in the O-arabinosylation of several proteins including extensins and small signaling peptides. Catalyzes the transfer of the initial L-arabinose to the hydroxyl group of Hyp residues. Probably involved in the arabinosylation of CLAVATA3/ESR-related (CLE) signaling peptides that move from root to shoot, to interact with receptor kinase signaling that regulates nodulation. Involved in long distance nodulation signaling events. Involved in the autoregulation of nodulation (AON), a long distance systemic signaling from root to shoot and back again, which allows legumes to limit the number of root nodules formed based on available nitrogen and previous rhizobial colonization. The protein is Hydroxyproline O-arabinosyltransferase NOD3 of Pisum sativum (Garden pea).